Here is a 305-residue protein sequence, read N- to C-terminus: tRNA-cytidine(32) 2-sulfurtransferase (305 aa).

The disordered stretch occupies residues 1 to 20; the sequence is MTAVLPLPHPLADPAPRDPR. The PP-loop motif signature appears at 59-64; it reads SGGKDS. Residues cysteine 134, cysteine 137, and cysteine 225 each contribute to the [4Fe-4S] cluster site. A compositionally biased stretch (low complexity) spans 282 to 293; it reads DAPPDLAPDPGA. Positions 282-305 are disordered; sequence DAPPDLAPDPGAWLTASDATHDSD.

It belongs to the TtcA family. In terms of assembly, homodimer. Mg(2+) serves as cofactor. Requires [4Fe-4S] cluster as cofactor.

The protein localises to the cytoplasm. The catalysed reaction is cytidine(32) in tRNA + S-sulfanyl-L-cysteinyl-[cysteine desulfurase] + AH2 + ATP = 2-thiocytidine(32) in tRNA + L-cysteinyl-[cysteine desulfurase] + A + AMP + diphosphate + H(+). Its pathway is tRNA modification. Catalyzes the ATP-dependent 2-thiolation of cytidine in position 32 of tRNA, to form 2-thiocytidine (s(2)C32). The sulfur atoms are provided by the cysteine/cysteine desulfurase (IscS) system. The polypeptide is tRNA-cytidine(32) 2-sulfurtransferase (Xanthomonas oryzae pv. oryzae (strain MAFF 311018)).